The chain runs to 127 residues: Large ribosomal subunit protein bL17 (127 aa).

This sequence belongs to the bacterial ribosomal protein bL17 family. Part of the 50S ribosomal subunit. Contacts protein L32.

The protein is Large ribosomal subunit protein bL17 of Lactiplantibacillus plantarum (strain ATCC BAA-793 / NCIMB 8826 / WCFS1) (Lactobacillus plantarum).